A 206-amino-acid chain; its full sequence is N-(5'-phosphoribosyl)anthranilate isomerase (206 aa).

The protein belongs to the TrpF family.

It catalyses the reaction N-(5-phospho-beta-D-ribosyl)anthranilate = 1-(2-carboxyphenylamino)-1-deoxy-D-ribulose 5-phosphate. The protein operates within amino-acid biosynthesis; L-tryptophan biosynthesis; L-tryptophan from chorismate: step 3/5. This is N-(5'-phosphoribosyl)anthranilate isomerase from Chlamydia caviae (strain ATCC VR-813 / DSM 19441 / 03DC25 / GPIC) (Chlamydophila caviae).